Consider the following 132-residue polypeptide: Ig kappa chain V-III region MOPC 321 (132 aa).

A signal peptide spans 1 to 20; sequence METDTLLLWVLLLWVPGSTG. Residues 21 to 43 form a framework-1 region; that stretch reads DIVLTQSPASLAVSLGQRATISC. Residues cysteine 43 and cysteine 112 are joined by a disulfide bond. The segment at 44–58 is complementarity-determining-1; the sequence is RASKSVNTYGNSFMZ. Residues 59 to 73 form a framework-2 region; sequence WYZZKPGZPPKLLIY. The interval 74–80 is complementarity-determining-2; the sequence is RASNLZS. The tract at residues 81-112 is framework-3; the sequence is GIPARFSGSGSRTBFTLTIBPVZABDVATYFC. Residues 113 to 121 are complementarity-determining-3; it reads ZZSBZBPWT. The segment at 122–131 is framework-4; that stretch reads FGSGTKLEIK.

This is Ig kappa chain V-III region MOPC 321 from Mus musculus (Mouse).